Here is a 680-residue protein sequence, read N- to C-terminus: UvrABC system protein B (680 aa).

The Helicase ATP-binding domain occupies 27-422 (AGALGGVTFQ…GRMAGEHVAE (396 aa)). 40-47 (GATGTGKT) provides a ligand contact to ATP. Positions 93-116 (YYDYYQPEAYIPQTDTYIEKSASI) match the Beta-hairpin motif. Residues 443–609 (QVDDLLHEIH…PIVKRLDANS (167 aa)) enclose the Helicase C-terminal domain. In terms of domain architecture, UVR spans 641–676 (PELVSQLEIQMRDAAKKLEFEKAAEYRDKIHKLRER).

This sequence belongs to the UvrB family. Forms a heterotetramer with UvrA during the search for lesions. Interacts with UvrC in an incision complex.

Its subcellular location is the cytoplasm. Functionally, the UvrABC repair system catalyzes the recognition and processing of DNA lesions. A damage recognition complex composed of 2 UvrA and 2 UvrB subunits scans DNA for abnormalities. Upon binding of the UvrA(2)B(2) complex to a putative damaged site, the DNA wraps around one UvrB monomer. DNA wrap is dependent on ATP binding by UvrB and probably causes local melting of the DNA helix, facilitating insertion of UvrB beta-hairpin between the DNA strands. Then UvrB probes one DNA strand for the presence of a lesion. If a lesion is found the UvrA subunits dissociate and the UvrB-DNA preincision complex is formed. This complex is subsequently bound by UvrC and the second UvrB is released. If no lesion is found, the DNA wraps around the other UvrB subunit that will check the other stand for damage. This is UvrABC system protein B from Gloeobacter violaceus (strain ATCC 29082 / PCC 7421).